The primary structure comprises 561 residues: Putative transport protein YbjL (561 aa).

Transmembrane regions (helical) follow at residues 8-28 (LLNG…LCLG), 32-52 (LGSI…LLGQ), 66-86 (FMLF…SIFF), 94-114 (MLAL…GKLF), and 158-178 (NLSL…IVGA). RCK C-terminal domains lie at 200-288 (RGLD…SFRN) and 292-373 (VFDR…RIGF). 5 consecutive transmembrane segments (helical) span residues 383-403 (LLAF…TFQF), 406-426 (FSFG…LGFM), 451-471 (VFMA…LGAI), 475-495 (MLIA…LFGA), and 540-560 (AIAN…WPGL).

This sequence belongs to the AAE transporter (TC 2.A.81) family. YbjL subfamily.

The protein localises to the cell membrane. This chain is Putative transport protein YbjL, found in Escherichia coli O139:H28 (strain E24377A / ETEC).